A 261-amino-acid polypeptide reads, in one-letter code: V-type proton ATPase subunit D (261 aa).

Position 241 is a phosphoserine (S241).

It belongs to the V-ATPase D subunit family. V-ATPase is a heteromultimeric enzyme composed of a peripheral catalytic V1 complex (components A to H) attached to an integral membrane V0 proton pore complex (components: a, c, c'', d and e).

It is found in the vacuole membrane. Functionally, subunit of the peripheral V1 complex of vacuolar ATPase. V-ATPase is responsible for acidifying a variety of intracellular compartments in eukaryotic cells, thus providing most of the energy required for transport processes in the vacuolar system. The sequence is that of V-type proton ATPase subunit D (VHA-D) from Arabidopsis thaliana (Mouse-ear cress).